The chain runs to 254 residues: 5-oxoprolinase subunit A (254 aa).

The protein belongs to the LamB/PxpA family. As to quaternary structure, forms a complex composed of PxpA, PxpB and PxpC.

It catalyses the reaction 5-oxo-L-proline + ATP + 2 H2O = L-glutamate + ADP + phosphate + H(+). In terms of biological role, catalyzes the cleavage of 5-oxoproline to form L-glutamate coupled to the hydrolysis of ATP to ADP and inorganic phosphate. This Burkholderia vietnamiensis (strain G4 / LMG 22486) (Burkholderia cepacia (strain R1808)) protein is 5-oxoprolinase subunit A.